Reading from the N-terminus, the 158-residue chain is Developmental pluripotency-associated protein 3 (158 aa).

2 disordered regions span residues 1–38 (MDEPSEKVDPVVNPETQMYDGSQREDEGDSPDDSEILQ) and 54–78 (SAKPTKYHRRQRVRLQVKSQPVENR). A compositionally biased stretch (acidic residues) spans 26–35 (DEGDSPDDSE). Residues 58–68 (TKYHRRQRVRL) are compositionally biased toward basic residues.

The protein localises to the nucleus. The protein resides in the cytoplasm. In terms of biological role, primordial germ cell (PGCs)-specific protein involved in epigenetic chromatin reprogramming in the zygote following fertilization. In zygotes, DNA demethylation occurs selectively in the paternal pronucleus before the first cell division, while the adjacent maternal pronucleus and certain paternally-imprinted loci are protected from this process. Participates in protection of DNA methylation in the maternal pronucleus by preventing conversion of 5mC to 5hmC: specifically recognizes and binds histone H3 dimethylated at 'Lys-9' (H3K9me2) on maternal genome, and protects maternal genome from TET3-mediated conversion to 5hmC and subsequent DNA demethylation. Does not bind paternal chromatin, which is mainly packed into protamine and does not contain much H3K9me2 mark. Also protects imprinted loci that are marked with H3K9me2 in mature sperm from DNA demethylation in early embryogenesis. May be important for the totipotent/pluripotent states continuing through preimplantation development. Also involved in chromatin condensation in oocytogenesis. In Rattus norvegicus (Rat), this protein is Developmental pluripotency-associated protein 3 (Dppa3).